Consider the following 211-residue polypeptide: Riboflavin kinase (211 aa).

Positions 1-85 are H-T-H motif-like; the sequence is MKKILMLIEL…CDKISNALSK (85 aa). The riboflavin kinase stretch occupies residues 86-211; it reads GVIVGEVVSG…GDRVRLEVIQ (126 aa). Position 95-100 (95-100) interacts with CDP; the sequence is GLGEGA. Positions 122 and 124 each coordinate Mg(2+). Residues threonine 178 and glutamate 186 each contribute to the FMN site. 191-194 provides a ligand contact to CDP; the sequence is VNLR.

It belongs to the archaeal riboflavin kinase family. Mg(2+) serves as cofactor.

It carries out the reaction riboflavin + CTP = CDP + FMN + H(+). It participates in cofactor biosynthesis; FMN biosynthesis; FMN from riboflavin (CTP route): step 1/1. Functionally, catalyzes the CTP-dependent phosphorylation of riboflavin (vitamin B2) to form flavin mononucleotide (FMN). The sequence is that of Riboflavin kinase (ribK) from Thermococcus kodakarensis (strain ATCC BAA-918 / JCM 12380 / KOD1) (Pyrococcus kodakaraensis (strain KOD1)).